The sequence spans 380 residues: Endopolygalacturonase AN8327 (380 aa).

The first 19 residues, 1–19 (MFYALGPLALFAFATEVMA), serve as a signal peptide directing secretion. A propeptide spanning residues 20-35 (TPVAYPMTTASPTLAK) is cleaved from the precursor. Residues Cys39 and Cys57 are joined by a disulfide bond. PbH1 repeat units lie at residues 147 to 169 (LTDS…SING), 170 to 200 (CDGL…DIGE), 201 to 222 (SSNV…AVNS), 223 to 243 (GTSI…SIGS), 252 to 273 (VDTV…RIKA), 281 to 303 (IKGV…LIEQ), and 315 to 338 (TSGI…DSDG). Asp215 acts as the Proton donor in catalysis. Residues Cys217 and Cys233 are joined by a disulfide bond. His237 is an active-site residue. Asn327 is a glycosylation site (N-linked (GlcNAc...) asparagine). Cys345 and Cys350 are joined by a disulfide. N-linked (GlcNAc...) asparagine glycosylation occurs at Asn352. Cys369 and Cys378 are joined by a disulfide.

Belongs to the glycosyl hydrolase 28 family.

Its subcellular location is the secreted. The enzyme catalyses (1,4-alpha-D-galacturonosyl)n+m + H2O = (1,4-alpha-D-galacturonosyl)n + (1,4-alpha-D-galacturonosyl)m.. In terms of biological role, involved in maceration and soft-rotting of plant tissue. Hydrolyzes the 1,4-alpha glycosidic bonds of de-esterified pectate in the smooth region of the plant cell wall. This Emericella nidulans (strain FGSC A4 / ATCC 38163 / CBS 112.46 / NRRL 194 / M139) (Aspergillus nidulans) protein is Endopolygalacturonase AN8327.